Consider the following 484-residue polypeptide: MEEWVEKYRPKSLNDVAGHNKTKQALINWIESFVNGQKQKPILLAGPPGSGKTTLAHAIAKDYAFDVIELNASDKRNKDVIAQVVGTAATSKSLTGKRTLIVLDEVDGLSGNDDRGGVAEIIKVLKTAENPVILTANDVYKPALMTLRNNVNLINVGSVHTNSIPPVLRKIALKEGFEIDEKVIKTIASHSGGDLRAAINDLQSLATGGSLEVEDAKELPDRDSEKSIFDAMRIIMKTTHYDIATSATRDVKEDLGTIQEWISENLPKEYLRYKDLAGGYDYLSKSDVFLGRVFKRQYFGLWRYASALMTAGTALAKEEKYRGFTRYGPPTIFTKLSRTKGSRQKMKDILKKIALKTHTSTKRARNTLDYLVVIFESNPEVSAELVEYYELTKLEMEFLTNKTIAKNIFSVIAGKKPKVKTETPKKKEKTKEAMPIIPKRPRISEPPEPLKEVITTIEKSVEKADTKEKEKKDPKKQATLDSFF.

46-53 (GPPGSGKT) contributes to the ATP binding site. Composition is skewed to basic and acidic residues over residues 419 to 432 (VKTE…KTKE), 442 to 451 (RISEPPEPLK), and 459 to 478 (KSVE…KKQA). Residues 419–484 (VKTETPKKKE…KKQATLDSFF (66 aa)) are disordered.

The protein belongs to the activator 1 small subunits family. RfcL subfamily. As to quaternary structure, heteromultimer composed of small subunits (RfcS) and large subunits (RfcL).

Part of the RFC clamp loader complex which loads the PCNA sliding clamp onto DNA. This is Replication factor C large subunit from Methanococcus maripaludis (strain C5 / ATCC BAA-1333).